Reading from the N-terminus, the 1091-residue chain is Sodium/potassium exporting P-type ATPase 5 (1091 aa).

Topologically, residues Met-1 to Lys-63 are cytoplasmic. Residues Ala-64 to Ile-84 traverse the membrane as a helical segment. Residues Ser-85–Asp-90 lie on the Extracellular side of the membrane. The chain crosses the membrane as a helical span at residues Trp-91–Gln-111. The Cytoplasmic portion of the chain corresponds to Glu-112–Lys-282. Residues Leu-283–Ala-303 traverse the membrane as a helical segment. Over Ser-304–Arg-312 the chain is Extracellular. The helical transmembrane segment at Val-313–Leu-333 threads the bilayer. The Cytoplasmic segment spans residues Thr-334–Phe-815. Asp-369 functions as the 4-aspartylphosphate intermediate in the catalytic mechanism. Residues Asp-369 and Thr-371 each coordinate Mg(2+). ATP is bound by residues Thr-371 and Glu-483. A disordered region spans residues Ala-499 to Gly-525. The span at Glu-503 to Gln-519 shows a compositional bias: polar residues. Residues Lys-561, Arg-606, Thr-673, Gly-674, Asp-675, Arg-732, and Lys-738 each coordinate ATP. Position 757 (Asp-757) interacts with Mg(2+). Residue Asn-760 participates in ATP binding. The helical transmembrane segment at Val-816–Phe-836 threads the bilayer. Residues Arg-837–Ser-848 lie on the Extracellular side of the membrane. Residues Pro-849 to Leu-869 traverse the membrane as a helical segment. The Cytoplasmic portion of the chain corresponds to Glu-870–Glu-885. The chain crosses the membrane as a helical span at residues Val-886–Gly-906. The Extracellular segment spans residues Ser-907–Arg-943. The chain crosses the membrane as a helical span at residues Ser-944 to Met-964. Over Arg-965–Phe-991 the chain is Cytoplasmic. The helical transmembrane segment at Leu-992 to Ile-1012 threads the bilayer. The Extracellular segment spans residues Asn-1013–Pro-1021. The helical transmembrane segment at Ile-1022–Leu-1042 threads the bilayer. Residues Tyr-1043–His-1091 are Cytoplasmic-facing.

It belongs to the cation transport ATPase (P-type) (TC 3.A.3) family. Type IID subfamily. Mg(2+) is required as a cofactor. In terms of processing, the active site is phosphorylated in presence of sodium or potassium and in conditions of higher pH. Not phosphorylated in presence of calcium ions.

The protein localises to the cell membrane. The enzyme catalyses Na(+)(in) + ATP + H2O = Na(+)(out) + ADP + phosphate + H(+). It carries out the reaction K(+)(in) + ATP + H2O = K(+)(out) + ADP + phosphate + H(+). Catalyzes the hydrolysis of ATP coupled with the export of sodium and potassium from the cell. May export potassium less efficiently. May transport other cations such as lithium. Sodium/potassium efflux ATPases are involved in salt tolerance and maintaining the membrane potential across the plasma membrane in high salinity (Na+) or alkaline (K+) environments. This Saccharomyces cerevisiae (strain ATCC 204508 / S288c) (Baker's yeast) protein is Sodium/potassium exporting P-type ATPase 5.